Here is a 217-residue protein sequence, read N- to C-terminus: Melanocortin-2 receptor accessory protein 2A (217 aa).

Residue N8 is glycosylated (N-linked (GlcNAc...) asparagine). The helical transmembrane segment at I42 to T62 threads the bilayer.

This sequence belongs to the MRAP family. As to quaternary structure, interacts with mc4r.

Its subcellular location is the cell membrane. It localises to the endoplasmic reticulum membrane. Functionally, inhibitor of melanocortin receptor 4 (mc4r), a receptor involved in energy homeostasis. Plays a role during larval development in the control of energy homeostasis and body weight regulation by decreasing ligand-sensitivity of mc4r and mc4r-mediated generation of cAMP, leading to stimulate growth during larval development. Acts by stabilizing an inactive conformation of mc4r during embryonic development, when all the energy consumed is obtained from the yolk sac, possibly to speed the rapid maturation to the mobile free-feeding juvenile stage reached at 5 dpf. The polypeptide is Melanocortin-2 receptor accessory protein 2A (mrap2a) (Danio rerio (Zebrafish)).